Reading from the N-terminus, the 305-residue chain is MENKPPVINLPEKETVNTPQKGGKFTINDFEIGRPLGKGKFGSVYLARTKTGHFHVAIKVLFKSQLISGGVEHQLEREIEIQSHLNHPNIIKLYTYFWDAKKIYLVLEYAPGGEMYKQLTVSKRFSEPTAAKYMYEIADALSYCHRKNVIHRDIKPENLLIGSQGELKIGDFGWSVHAPSNKRQTMCGTMDYLPPEMVNGADHSDAVDLWAIGVLCYEFLVGKPPFEHEDQSKTYAAIKAARFTYPDSVKKGARDLIGRLLVVDPKARCTLEQVKEHYWIQGMMEAKIRAEKQQKIEKEASLRNH.

In terms of domain architecture, Protein kinase spans 30–280; sequence FEIGRPLGKG…LEQVKEHYWI (251 aa). ATP-binding positions include 36 to 44 and K59; that span reads LGKGKFGSV. D153 functions as the Proton acceptor in the catalytic mechanism.

This sequence belongs to the protein kinase superfamily. Ser/Thr protein kinase family. Aurora subfamily. In terms of assembly, component of the CPC complex which consists of icp-1; csc-1; bir-1 and air-2. Within the complex, interacts with icp-1; csc-1 and bir-1. Interacts with zen-4. Interacts with tlk-1 and bmk-1. Phosphorylated. Increased phosphorylation upon chromatin obstructions at anaphase.

Its subcellular location is the cytoplasm. It is found in the cytoskeleton. The protein resides in the chromosome. The protein localises to the midbody. It localises to the spindle. The catalysed reaction is L-seryl-[protein] + ATP = O-phospho-L-seryl-[protein] + ADP + H(+). It carries out the reaction L-threonyl-[protein] + ATP = O-phospho-L-threonyl-[protein] + ADP + H(+). Its function is as follows. Serine/threonine-protein kinase component of the chromosomal passenger complex (CPC), a complex that acts as a key regulator of chromosome segregation and cytokinesis. The CPC complex has essential functions at the centromere in ensuring correct chromosome alignment and segregation. Required for histone H3 phosphorylation during segregation of homologous chromosomes in meiosis and mitosis. Required for histone H3 'Ser-10' phosphorylation. Phosphorylates tlk-1 at 'Ser-634', which enhances its activity. Phosphorylates zen-4 at 'Ser-680'. Required for the recruitment of bub-1 to the ring-shaped domain between chromosomes during meiotic anaphase I. Also required for the localization of the condensin I complex subunit smc-4 to mitotic chromosomes. Acts at the spindle midzone and the midbody to prevent cleavage furrow regression upon chromatin obstructions during cytokinesis. This is Aurora/IPL1-related protein kinase 2 from Caenorhabditis elegans.